Consider the following 413-residue polypeptide: Ras association domain-containing protein 5 (413 aa).

Positions 1–103 (MASPAIGQRP…RPRDVRSIFE (103 aa)) are disordered. The segment covering 52 to 74 (SEDRGGRRSGRRDPEPTPRDCRH) has biased composition (basic and acidic residues). The Phorbol-ester/DAG-type zinc-finger motif lies at 117–165 (GHRFVELALRGGPGWCDLCGREVLRQALRCANCKFTCHSECRSLIQLDC). Residues Ser-177 and Ser-274 each carry the phosphoserine modification. The region spanning 265 to 359 (PAATTDKRTS…LSFVLKENET (95 aa)) is the Ras-associating domain. A Phosphothreonine modification is found at Thr-347. Residues 361-408 (EVEWDAFSIPELQNFLTILEKEEQDKIHQLQKKYNKFRQKLEEALRES) enclose the SARAH domain.

Interacts directly with activated HRAS; a RASSF5-STK4/MST1 complex probably associates with activated HRAS. Interacts with KRAS. Probably interacts with Ras-like GTPases RRAS, MRAS, RAP1B, RAP2A and RALA. Interacts with RRAS2. Can self-associate. Interacts with RSSF1 isoform A. The RSSF1 isoform A-RSSF5 heterodimer probably mediates the association of RSSF1 with HRAS. Isoform 2 interacts with activated RAP1A and ITGAL/LFA-1. Binds STK4/MST1, inhibiting STK4/MST1 autoactivation.

It is found in the cytoplasm. Its subcellular location is the cytoskeleton. In terms of biological role, potential tumor suppressor. Seems to be involved in lymphocyte adhesion by linking RAP1A activation upon T-cell receptor or chemokine stimulation to integrin activation. Isoform 2 stimulates lymphocyte polarization and the patch-like distribution of ITGAL/LFA-1, resulting in an enhanced adhesion to ICAM1. Together with RAP1A may participate in regulation of microtubule growth. The association of isoform 2 with activated RAP1A is required for directional movement of endothelial cells during wound healing. May be involved in regulation of Ras apoptotic function. The RASSF5-STK4/MST1 complex may mediate HRAS and KRAS induced apoptosis. In Mus musculus (Mouse), this protein is Ras association domain-containing protein 5 (Rassf5).